We begin with the raw amino-acid sequence, 86 residues long: Curamycin polyketide synthase acyl carrier protein (86 aa).

A Carrier domain is found at 7-86 (QVTVEELATL…VVNGALASGA (80 aa)). Residue S44 is modified to O-(pantetheine 4'-phosphoryl)serine.

4'-phosphopantetheine is transferred from CoA to a specific serine of the apo-ACP-like protein.

It functions in the pathway antibiotic biosynthesis; curamycin biosynthesis. In terms of biological role, acyl carrier protein. The polypeptide is Curamycin polyketide synthase acyl carrier protein (curE) (Streptomyces cyaneus (Streptomyces curacoi)).